The following is an 80-amino-acid chain: Adipogenin (80 aa).

The helical transmembrane segment at 14-34 (FSFLVFWFCLPVGLLLLLIIW) threads the bilayer.

Belongs to the adipogenin family.

Its subcellular location is the membrane. It is found in the nucleus. In terms of biological role, plays a role in stimulating adipocyte differentiation and development. This is Adipogenin from Homo sapiens (Human).